The following is a 299-amino-acid chain: MKKNILNLALVGALSASFLMAKPAHNANNSTHNTKETTDASAGVLATVDGRPITKSDFDMIKQRNPNFDFDKLKEKEKEALIEQAIRTALVENEAKAEKLNQTPEFKAMMEAVKKQALVEFWAKKQAEEVKKIQIPEKEMQDFYNANKDQLFVKQEAHARHILVKTEDEAKRIISEIDKQPKAKKEAKFIELANRDTIDPNSKNAQNGGDLGKFQKNQMAPDFSKAAFALTPGDYTKTPVKTEFGYHIIYLISKDSPVTYTYEQAKPTIKGMLQEKLFQERMNQRIEELRKHAKIVINK.

A signal peptide spans 1–21; it reads MKKNILNLALVGALSASFLMA. The PpiC domain occupies 154 to 253; it reads KQEAHARHIL…FGYHIIYLIS (100 aa).

It carries out the reaction [protein]-peptidylproline (omega=180) = [protein]-peptidylproline (omega=0). This is Putative peptidyl-prolyl cis-trans isomerase jhp_0161 from Helicobacter pylori (strain J99 / ATCC 700824) (Campylobacter pylori J99).